The primary structure comprises 181 residues: Adenine phosphoribosyltransferase (181 aa).

This sequence belongs to the purine/pyrimidine phosphoribosyltransferase family. Homodimer.

It is found in the cytoplasm. It catalyses the reaction AMP + diphosphate = 5-phospho-alpha-D-ribose 1-diphosphate + adenine. The protein operates within purine metabolism; AMP biosynthesis via salvage pathway; AMP from adenine: step 1/1. Catalyzes a salvage reaction resulting in the formation of AMP, that is energically less costly than de novo synthesis. In Methylobacterium radiotolerans (strain ATCC 27329 / DSM 1819 / JCM 2831 / NBRC 15690 / NCIMB 10815 / 0-1), this protein is Adenine phosphoribosyltransferase.